The following is a 1788-amino-acid chain: Glutamine and serine-rich protein 1 (1788 aa).

Over residues 1–53 the composition is skewed to low complexity; the sequence is MDAHYAPAGFAEPPAPPASAATQPAAPAWAYEARVPAAASSPSCSGSSPSLKA. 3 disordered regions span residues 1-69, 472-498, and 532-617; these read MDAH…DVLQ, TRDLPSVSESQNYSSGQSQGLSPVSQT, and SYSS…SKQD. Polar residues-rich tracts occupy residues 60 to 69, 478 to 492, 532 to 569, and 576 to 594; these read PSQSESDVLQ, VSESQNYSSGQSQGL, SYSSASRGQSLPVSTPTPSYTSMHPSPNAQTQGSSAQP, and VQSSFASSTRGQTLQSSIP. Residues serine 670 and serine 940 each carry the phosphoserine modification. A Phosphothreonine modification is found at threonine 1003. Phosphoserine is present on serine 1041. 2 disordered regions span residues 1104–1163 and 1234–1264; these read QPGD…TDVY and IQTTRTFCPPPFAKTSPAAQAPSETGGVSLS. Lysine 1112 participates in a covalent cross-link: Glycyl lysine isopeptide (Lys-Gly) (interchain with G-Cter in SUMO2). Residues 1126–1136 show a composition bias toward basic and acidic residues; the sequence is PKEKAKGKEQG. Lysine 1137 is covalently cross-linked (Glycyl lysine isopeptide (Lys-Gly) (interchain with G-Cter in SUMO2)). A phosphoserine mark is found at serine 1262, serine 1281, and serine 1282. A Phosphothreonine modification is found at threonine 1394. Phosphoserine is present on serine 1401. Residues 1494–1588 are disordered; that stretch reads VCSKKPRNKP…DEGFEPPAPS (95 aa). Over residues 1510-1537 the composition is skewed to low complexity; it reads IPSKPSSISKTSDPPVSKTTTTKTPSTK. A compositionally biased stretch (basic and acidic residues) spans 1545 to 1561; the sequence is IKAEPPPKKRKKWKEEF. A compositionally biased stretch (low complexity) spans 1562–1575; the sequence is SSSQSESSPEVRSS.

As to quaternary structure, interacts with TET1.

Its subcellular location is the chromosome. Functionally, plays an essential role in the protection and maintenance of transcriptional and developmental programs. Protects many bivalent promoters and poised enhancers from hypermethylation, showing a marked preference for these regulatory elements over other types of promoters or enhancers. Mechanistically, cooperates with TET1 and binds to DNA in a common complex to inhibit the binding of DNMT3A/3B and therefore de novo methylation. This is Glutamine and serine-rich protein 1 from Mus musculus (Mouse).